The sequence spans 196 residues: Mpv17-like protein (196 aa).

The Cytoplasmic segment spans residues Met1–Pro16. Residues Pro16–Ala55 form a targeting to peroxisomes region. A helical transmembrane segment spans residues Trp17–Leu34. Residues Gln35–His50 lie on the Lumenal side of the membrane. A helical transmembrane segment spans residues Val51 to Leu67. The Cytoplasmic portion of the chain corresponds to Asn68–Gln90. Residues Ala91–Leu108 form a helical membrane-spanning segment. Over Gln109–Thr150 the chain is Lumenal. The chain crosses the membrane as a helical span at residues Ala151–Ser167. The Cytoplasmic portion of the chain corresponds to Gln168–Lys196.

The protein belongs to the peroxisomal membrane protein PXMP2/4 family.

Its subcellular location is the peroxisome membrane. Its function is as follows. Participates in reactive oxygen species metabolism by up- or down-regulation of the genes of antioxidant enzymes. Protective against the mitochondrial apoptotic cascade. This chain is Mpv17-like protein (MPV17L), found in Bos taurus (Bovine).